The primary structure comprises 477 residues: Methylenetetrahydrofolate--tRNA-(uracil-5-)-methyltransferase TrmFO (477 aa).

Residue 14 to 19 (GGGLAG) coordinates FAD.

Belongs to the MnmG family. TrmFO subfamily. It depends on FAD as a cofactor.

It is found in the cytoplasm. The enzyme catalyses uridine(54) in tRNA + (6R)-5,10-methylene-5,6,7,8-tetrahydrofolate + NADH + H(+) = 5-methyluridine(54) in tRNA + (6S)-5,6,7,8-tetrahydrofolate + NAD(+). It carries out the reaction uridine(54) in tRNA + (6R)-5,10-methylene-5,6,7,8-tetrahydrofolate + NADPH + H(+) = 5-methyluridine(54) in tRNA + (6S)-5,6,7,8-tetrahydrofolate + NADP(+). Catalyzes the folate-dependent formation of 5-methyl-uridine at position 54 (M-5-U54) in all tRNAs. This Rhizobium johnstonii (strain DSM 114642 / LMG 32736 / 3841) (Rhizobium leguminosarum bv. viciae) protein is Methylenetetrahydrofolate--tRNA-(uracil-5-)-methyltransferase TrmFO.